Consider the following 149-residue polypeptide: Large ribosomal subunit protein uL15 (149 aa).

The tract at residues 1–58 (MKLHNLRPAKGGEVKARKRVGRGYGSGLGHNAGRGRDGQNSRSGGGVRPGFEGGQMPL) is disordered. Composition is skewed to gly residues over residues 22–32 (RGYGSGLGHNA) and 43–53 (SGGGVRPGFEG).

It belongs to the universal ribosomal protein uL15 family. In terms of assembly, part of the 50S ribosomal subunit.

Binds to the 23S rRNA. The sequence is that of Large ribosomal subunit protein uL15 from Finegoldia magna (strain ATCC 29328 / DSM 20472 / WAL 2508) (Peptostreptococcus magnus).